The sequence spans 117 residues: MITKQSSNALRKKRHLRLRKIVSGTSQRPRLNVFRSNKFLYVQIIDDTKQTTLCSANSKEANVWGSNIKAAEAVGALIAKKALSQGIKNVVFDRSGYFYHGKIKALADACRKSGLHF.

This sequence belongs to the universal ribosomal protein uL18 family. Part of the 50S ribosomal subunit; part of the 5S rRNA/L5/L18/L25 subcomplex. Contacts the 5S and 23S rRNAs.

In terms of biological role, this is one of the proteins that bind and probably mediate the attachment of the 5S RNA into the large ribosomal subunit, where it forms part of the central protuberance. This chain is Large ribosomal subunit protein uL18, found in Aster yellows witches'-broom phytoplasma (strain AYWB).